We begin with the raw amino-acid sequence, 297 residues long: Nucleotide-binding protein BURPS668_0577 (297 aa).

8–15 provides a ligand contact to ATP; sequence GISGSGKS. 57–60 provides a ligand contact to GTP; that stretch reads DARS.

It belongs to the RapZ-like family.

In terms of biological role, displays ATPase and GTPase activities. This Burkholderia pseudomallei (strain 668) protein is Nucleotide-binding protein BURPS668_0577.